Consider the following 375-residue polypeptide: Succinyl-diaminopimelate desuccinylase (375 aa).

H66 provides a ligand contact to Zn(2+). D68 is an active-site residue. D99 serves as a coordination point for Zn(2+). The active-site Proton acceptor is E133. 3 residues coordinate Zn(2+): E134, E162, and H348.

The protein belongs to the peptidase M20A family. DapE subfamily. As to quaternary structure, homodimer. Zn(2+) serves as cofactor. Co(2+) is required as a cofactor.

The enzyme catalyses N-succinyl-(2S,6S)-2,6-diaminopimelate + H2O = (2S,6S)-2,6-diaminopimelate + succinate. Its pathway is amino-acid biosynthesis; L-lysine biosynthesis via DAP pathway; LL-2,6-diaminopimelate from (S)-tetrahydrodipicolinate (succinylase route): step 3/3. Functionally, catalyzes the hydrolysis of N-succinyl-L,L-diaminopimelic acid (SDAP), forming succinate and LL-2,6-diaminopimelate (DAP), an intermediate involved in the bacterial biosynthesis of lysine and meso-diaminopimelic acid, an essential component of bacterial cell walls. The sequence is that of Succinyl-diaminopimelate desuccinylase from Stenotrophomonas maltophilia (strain R551-3).